We begin with the raw amino-acid sequence, 432 residues long: Lysosomal acid phosphatase (432 aa).

An N-terminal signal peptide occupies residues 1–32; sequence MADGSCLGSGPQLGLIALLVVLLFSAVPLAQS. Residues 33–384 are Lumenal-facing; sequence RELRFVTLVY…TTSFIMTEET (352 aa). Catalysis depends on H44, which acts as the Nucleophile. Residues N94, N135, N179, N193, and N269 are each glycosylated (N-linked (GlcNAc...) asparagine). 3 disulfides stabilise this stretch: C161-C373, C214-C313, and C348-C352. D290 functions as the Proton donor in the catalytic mechanism. N-linked (GlcNAc...) asparagine glycans are attached at residues N325 and N334. The helical transmembrane segment at 385-405 threads the bilayer; the sequence is IIGLTIGAIALFIIIVVLMLL. Over 406 to 432 the chain is Cytoplasmic; the sequence is SCNEPKDDGYQHVSDEGDDHETKGLAM.

Belongs to the histidine acid phosphatase family. In terms of processing, the membrane-bound form is converted to the soluble form by sequential proteolytic processing. First, the C-terminal cytoplasmic tail is removed. Cleavage by a lysosomal protease releases the soluble form in the lysosome lumen.

It is found in the lysosome membrane. It localises to the lysosome lumen. It catalyses the reaction a phosphate monoester + H2O = an alcohol + phosphate. The chain is Lysosomal acid phosphatase (acp2) from Xenopus laevis (African clawed frog).